Here is a 553-residue protein sequence, read N- to C-terminus: ATP synthase F(1) complex subunit alpha, mitochondrial (553 aa).

The N-terminal 43 residues, 1 to 43 (MLSVRVAAAVVRALPRRAGLVSRNALGSSFIAARNFHASNTHL), are a transit peptide targeting the mitochondrion. A phosphoserine mark is found at Ser53 and Ser65. Position 76 is a phosphoserine; alternate (Ser76). O-linked (GlcNAc) serine; alternate glycosylation occurs at Ser76. Ser106 carries the post-translational modification Phosphoserine. Residues Lys123, Lys126, and Lys132 each carry the N6-acetyllysine modification. The residue at position 134 (Thr134) is a Phosphothreonine. Residue Lys161 is modified to N6-acetyllysine; alternate. Position 161 is an N6-succinyllysine; alternate (Lys161). Ser166 carries the phosphoserine modification. Lys167 is subject to N6-acetyllysine; alternate. Lys167 is modified (N6-succinyllysine; alternate). Ser184 carries the post-translational modification Phosphoserine. At Arg204 the chain carries Omega-N-methylarginine. The ATP site is built by Gln215, Gly217, Lys218, Thr219, and Ser220. Residue Thr219 participates in Mg(2+) binding. N6-acetyllysine; alternate occurs at positions 230 and 239. An N6-succinyllysine; alternate mark is found at Lys230 and Lys239. The residue at position 240 (Lys240) is an N6-acetyllysine. Lys261 and Lys305 each carry N6-acetyllysine; alternate. N6-succinyllysine; alternate occurs at positions 261 and 305. A Mg(2+)-binding site is contributed by Asp312. Position 427 is an N6-acetyllysine; alternate (Lys427). Residue Lys427 is modified to N6-succinyllysine; alternate. Lys434 is subject to N6-acetyllysine. Positions 473 and 475 each coordinate ATP. An N6-acetyllysine; alternate mark is found at Lys498, Lys506, Lys531, and Lys539. N6-succinyllysine; alternate is present on residues Lys498, Lys506, Lys531, and Lys539. Lys541 carries the post-translational modification N6-acetyllysine.

The protein belongs to the ATPase alpha/beta chains family. As to quaternary structure, homotrimer. Component of the ATP synthase complex composed at least of ATP5F1A/subunit alpha, ATP5F1B/subunit beta, ATP5MC1/subunit c (homooctomer), MT-ATP6/subunit a, MT-ATP8/subunit 8, ATP5ME/subunit e, ATP5MF/subunit f, ATP5MG/subunit g, ATP5MK/subunit k, ATP5MJ/subunit j, ATP5F1C/subunit gamma, ATP5F1D/subunit delta, ATP5F1E/subunit epsilon, ATP5PF/subunit F6, ATP5PB/subunit b, ATP5PD/subunit d, ATP5PO/subunit OSCP. ATP synthase complex consists of a soluble F(1) head domain (subunits alpha(3) and beta(3)) - the catalytic core - and a membrane F(0) domain - the membrane proton channel (subunits c, a, 8, e, f, g, k and j). These two domains are linked by a central stalk (subunits gamma, delta, and epsilon) rotating inside the F1 region and a stationary peripheral stalk (subunits F6, b, d, and OSCP). Interacts with ATPAF2. Interacts with HRG; the interaction occurs on the surface of T-cells and alters the cell morphology when associated with concanavalin (in vitro). Interacts with PLG (angiostatin peptide); the interaction inhibits most of the angiogenic properties of angiostatin. Interacts with BLOC1S1. Interacts with BCL2L1 isoform BCL-X(L); the interaction mediates the association of BCL2L1 isoform BCL-X(L) with the mitochondrial membrane F(1)F(0) ATP synthase and enhances neurons metabolic efficiency. Interacts with CLN5 and PPT1. Interacts with S100A1; this interaction increases F1-ATPase activity. Interacts with ABCB7; this interaction allows the regulation of cellular iron homeostasis and cellular reactive oxygen species (ROS) levels in cardiomyocytes. In terms of processing, acetylated on lysine residues. BLOC1S1 is required for acetylation.

It localises to the mitochondrion inner membrane. Its subcellular location is the cell membrane. Functionally, subunit alpha, of the mitochondrial membrane ATP synthase complex (F(1)F(0) ATP synthase or Complex V) that produces ATP from ADP in the presence of a proton gradient across the membrane which is generated by electron transport complexes of the respiratory chain. ATP synthase complex consist of a soluble F(1) head domain - the catalytic core - and a membrane F(1) domain - the membrane proton channel. These two domains are linked by a central stalk rotating inside the F(1) region and a stationary peripheral stalk. During catalysis, ATP synthesis in the catalytic domain of F(1) is coupled via a rotary mechanism of the central stalk subunits to proton translocation. In vivo, can only synthesize ATP although its ATP hydrolase activity can be activated artificially in vitro. With the catalytic subunit beta (ATP5F1B), forms the catalytic core in the F(1) domain. Subunit alpha does not bear the catalytic high-affinity ATP-binding sites. The sequence is that of ATP synthase F(1) complex subunit alpha, mitochondrial from Pongo abelii (Sumatran orangutan).